A 519-amino-acid polypeptide reads, in one-letter code: Laccase-2 (519 aa).

The signal sequence occupies residues 1–20 (MGLQRFSFFVTLALVARSLA). Plastocyanin-like domains are found at residues 22–147 (IGPV…FVVY) and 159–301 (VDNE…ILRY). The N-linked (GlcNAc...) asparagine glycan is linked to Asn74. 4 residues coordinate Cu cation: His84, His86, His129, and His131. 2 disulfide bridges follow: Cys105–Cys508 and Cys137–Cys225. N-linked (GlcNAc...) asparagine glycans are attached at residues Asn161, Asn228, Asn237, Asn271, Asn353, and Asn361. Residues 368 to 490 (TVPVLLQILS…AGFAIVFAED (123 aa)) form the Plastocyanin-like 3 domain. Residues His415, His418, His420, His472, Cys473, His474, and His478 each contribute to the Cu cation site.

The protein belongs to the multicopper oxidase family. As to quaternary structure, homodimer. It depends on Cu cation as a cofactor.

It localises to the secreted. It carries out the reaction 4 hydroquinone + O2 = 4 benzosemiquinone + 2 H2O. Lignin degradation and detoxification of lignin-derived products. The polypeptide is Laccase-2 (Trametes villosa (White-rot fungus)).